Consider the following 102-residue polypeptide: Scorpine-like-2 (102 aa).

Positions M1–C19 are cleaved as a signal peptide. Residues Q63 to Y102 form the BetaSPN-type CS-alpha/beta domain. Disulfide bonds link C66–C89, C75–C94, and C79–C96.

The protein belongs to the long chain scorpion toxin family. Class 3 subfamily. As to expression, expressed by the venom gland.

Its subcellular location is the secreted. Inhibits voltage-gated potassium channels. The polypeptide is Scorpine-like-2 (Urodacus yaschenkoi (Inland robust scorpion)).